The following is an 82-amino-acid chain: Small ribosomal subunit protein uS17 (82 aa).

The protein belongs to the universal ribosomal protein uS17 family. As to quaternary structure, part of the 30S ribosomal subunit.

In terms of biological role, one of the primary rRNA binding proteins, it binds specifically to the 5'-end of 16S ribosomal RNA. This is Small ribosomal subunit protein uS17 from Sulfurimonas denitrificans (strain ATCC 33889 / DSM 1251) (Thiomicrospira denitrificans (strain ATCC 33889 / DSM 1251)).